A 109-amino-acid chain; its full sequence is Thioredoxin 2 (109 aa).

Positions 2–109 constitute a Thioredoxin domain; sequence SGKYFEATDQ…IAKKLDEHIG (108 aa). The cysteines at positions 33 and 36 are disulfide-linked.

Belongs to the thioredoxin family.

Its function is as follows. Participates in various redox reactions through the reversible oxidation of its active center dithiol to a disulfide and catalyzes dithiol-disulfide exchange reactions. In Chlorobaculum tepidum (strain ATCC 49652 / DSM 12025 / NBRC 103806 / TLS) (Chlorobium tepidum), this protein is Thioredoxin 2 (trx2).